We begin with the raw amino-acid sequence, 461 residues long: Cysteine--tRNA ligase (461 aa).

Cys-28 is a binding site for Zn(2+). The short motif at 30-40 (ITVYDLCHIGH) is the 'HIGH' region element. The Zn(2+) site is built by Cys-209, His-234, and Glu-238. A 'KMSKS' region motif is present at residues 266 to 270 (KMSKS). Lys-269 is a binding site for ATP.

This sequence belongs to the class-I aminoacyl-tRNA synthetase family. Monomer. The cofactor is Zn(2+).

It is found in the cytoplasm. It carries out the reaction tRNA(Cys) + L-cysteine + ATP = L-cysteinyl-tRNA(Cys) + AMP + diphosphate. The polypeptide is Cysteine--tRNA ligase (Escherichia coli O6:K15:H31 (strain 536 / UPEC)).